We begin with the raw amino-acid sequence, 151 residues long: Small ribosomal subunit protein uS11 (151 aa).

Serine 16 carries the phosphoserine modification. Residues lysine 61, lysine 63, and lysine 106 each participate in a glycyl lysine isopeptide (Lys-Gly) (interchain with G-Cter in SUMO2) cross-link. The tract at residues 131–151 (DVTPIPSDSTRRKGGRRGRRL) is disordered. Threonine 133 bears the Phosphothreonine mark. Serine 139 carries the phosphoserine modification. The span at 142–151 (RKGGRRGRRL) shows a compositional bias: basic residues.

This sequence belongs to the universal ribosomal protein uS11 family. In terms of assembly, component of the small ribosomal subunit. Part of the small subunit (SSU) processome, composed of more than 70 proteins and the RNA chaperone small nucleolar RNA (snoRNA) U3.

It localises to the cytoplasm. Its subcellular location is the nucleus. It is found in the nucleolus. Its function is as follows. Component of the small ribosomal subunit. The ribosome is a large ribonucleoprotein complex responsible for the synthesis of proteins in the cell. Part of the small subunit (SSU) processome, first precursor of the small eukaryotic ribosomal subunit. During the assembly of the SSU processome in the nucleolus, many ribosome biogenesis factors, an RNA chaperone and ribosomal proteins associate with the nascent pre-rRNA and work in concert to generate RNA folding, modifications, rearrangements and cleavage as well as targeted degradation of pre-ribosomal RNA by the RNA exosome. This Mus musculus (Mouse) protein is Small ribosomal subunit protein uS11 (Rps14).